The chain runs to 507 residues: ATP synthase subunit alpha (507 aa).

An ATP-binding site is contributed by 170 to 177 (GDRKTGKT).

Belongs to the ATPase alpha/beta chains family. In terms of assembly, F-type ATPases have 2 components, CF(1) - the catalytic core - and CF(0) - the membrane proton channel. CF(1) has five subunits: alpha(3), beta(3), gamma(1), delta(1), epsilon(1). CF(0) has three main subunits: a(1), b(2) and c(9-12). The alpha and beta chains form an alternating ring which encloses part of the gamma chain. CF(1) is attached to CF(0) by a central stalk formed by the gamma and epsilon chains, while a peripheral stalk is formed by the delta and b chains.

Its subcellular location is the cell inner membrane. The enzyme catalyses ATP + H2O + 4 H(+)(in) = ADP + phosphate + 5 H(+)(out). Produces ATP from ADP in the presence of a proton gradient across the membrane. The alpha chain is a regulatory subunit. This is ATP synthase subunit alpha from Anaplasma marginale (strain Florida).